A 319-amino-acid chain; its full sequence is ATP-dependent 6-phosphofructokinase (319 aa).

Gly11 serves as a coordination point for ATP. Residue 21–25 participates in ADP binding; the sequence is RAVVR. Residues 72 to 73 and 102 to 105 contribute to the ATP site; these read RC and GNGS. Mg(2+) is bound at residue Asn103. 125–127 is a substrate binding site; that stretch reads TID. Asp127 serves as the catalytic Proton acceptor. Arg154 contributes to the ADP binding site. Substrate is bound by residues Arg162 and 169 to 171; that span reads MGR. ADP contacts are provided by residues 185-187, Arg211, and 213-215; these read GAE and KMH. Residues Glu222, Arg243, and 249–252 each bind substrate; that span reads HIQR.

This sequence belongs to the phosphofructokinase type A (PFKA) family. ATP-dependent PFK group I subfamily. Prokaryotic clade 'B1' sub-subfamily. In terms of assembly, homotetramer. The cofactor is Mg(2+).

The protein localises to the cytoplasm. It catalyses the reaction beta-D-fructose 6-phosphate + ATP = beta-D-fructose 1,6-bisphosphate + ADP + H(+). Its pathway is carbohydrate degradation; glycolysis; D-glyceraldehyde 3-phosphate and glycerone phosphate from D-glucose: step 3/4. Its activity is regulated as follows. Allosterically activated by ADP and other diphosphonucleosides, and allosterically inhibited by phosphoenolpyruvate. In terms of biological role, catalyzes the phosphorylation of D-fructose 6-phosphate to fructose 1,6-bisphosphate by ATP, the first committing step of glycolysis. In Clostridium acetobutylicum (strain ATCC 824 / DSM 792 / JCM 1419 / IAM 19013 / LMG 5710 / NBRC 13948 / NRRL B-527 / VKM B-1787 / 2291 / W), this protein is ATP-dependent 6-phosphofructokinase.